Here is a 469-residue protein sequence, read N- to C-terminus: Exodeoxyribonuclease 7 large subunit (469 aa).

This sequence belongs to the XseA family. In terms of assembly, heterooligomer composed of large and small subunits.

It localises to the cytoplasm. It catalyses the reaction Exonucleolytic cleavage in either 5'- to 3'- or 3'- to 5'-direction to yield nucleoside 5'-phosphates.. In terms of biological role, bidirectionally degrades single-stranded DNA into large acid-insoluble oligonucleotides, which are then degraded further into small acid-soluble oligonucleotides. This Mycoplasma mycoides subsp. mycoides SC (strain CCUG 32753 / NCTC 10114 / PG1) protein is Exodeoxyribonuclease 7 large subunit.